We begin with the raw amino-acid sequence, 339 residues long: Methionine import ATP-binding protein MetN 2 (339 aa).

Positions isoleucine 2–valine 241 constitute an ABC transporter domain. Glycine 38–serine 45 provides a ligand contact to ATP.

The protein belongs to the ABC transporter superfamily. Methionine importer (TC 3.A.1.24) family. In terms of assembly, the complex is composed of two ATP-binding proteins (MetN), two transmembrane proteins (MetI) and a solute-binding protein (MetQ).

The protein resides in the cell membrane. The enzyme catalyses L-methionine(out) + ATP + H2O = L-methionine(in) + ADP + phosphate + H(+). It catalyses the reaction D-methionine(out) + ATP + H2O = D-methionine(in) + ADP + phosphate + H(+). Functionally, part of the ABC transporter complex MetNIQ involved in methionine import. Responsible for energy coupling to the transport system. The sequence is that of Methionine import ATP-binding protein MetN 2 from Bacillus cereus (strain ATCC 14579 / DSM 31 / CCUG 7414 / JCM 2152 / NBRC 15305 / NCIMB 9373 / NCTC 2599 / NRRL B-3711).